A 512-amino-acid chain; its full sequence is Apolipoprotein N-acyltransferase (512 aa).

6 consecutive transmembrane segments (helical) span residues 5 to 25, 56 to 76, 92 to 112, 118 to 138, 168 to 188, and 195 to 215; these read LDKYWQHPALYWPLLILFAAA, FAVSSAYLFGLTAYTTQFYWI, VPLTFLLPAYLALYPALCFWL, LPRGIKIGLVLPILWTLTEFA, LGGIHMVTLATAFLGVWLVLA, and SGKRLLPIILIAALLAAGYTA. One can recognise a CN hydrolase domain in the interval 233-477; that stretch reads LQGNIDQTLK…ETVLEGHIKG (245 aa). Residue Glu271 is the Proton acceptor of the active site. Lys337 is a catalytic residue. Cys389 functions as the Nucleophile in the catalytic mechanism. Residues 487-507 form a helical membrane-spanning segment; sequence TGSSWWLMGILALAALILFIF.

This sequence belongs to the CN hydrolase family. Apolipoprotein N-acyltransferase subfamily.

It localises to the cell inner membrane. The enzyme catalyses N-terminal S-1,2-diacyl-sn-glyceryl-L-cysteinyl-[lipoprotein] + a glycerophospholipid = N-acyl-S-1,2-diacyl-sn-glyceryl-L-cysteinyl-[lipoprotein] + a 2-acyl-sn-glycero-3-phospholipid + H(+). It participates in protein modification; lipoprotein biosynthesis (N-acyl transfer). Functionally, catalyzes the phospholipid dependent N-acylation of the N-terminal cysteine of apolipoprotein, the last step in lipoprotein maturation. This chain is Apolipoprotein N-acyltransferase, found in Neisseria meningitidis serogroup B (strain ATCC BAA-335 / MC58).